The following is a 336-amino-acid chain: Protein-glutamate methylesterase/protein-glutamine glutaminase 1 (336 aa).

One can recognise a Response regulatory domain in the interval 2–119 (KIAIVNDMPL…GNPQEAAAPL (118 aa)). Residue D53 is modified to 4-aspartylphosphate. The CheB-type methylesterase domain occupies 147 to 336 (TASRQRLVAI…APRLLEIFPK (190 aa)). Catalysis depends on residues S159, H186, and D279.

This sequence belongs to the CheB family. In terms of processing, phosphorylated by CheA. Phosphorylation of the N-terminal regulatory domain activates the methylesterase activity.

The protein resides in the cytoplasm. It carries out the reaction [protein]-L-glutamate 5-O-methyl ester + H2O = L-glutamyl-[protein] + methanol + H(+). The catalysed reaction is L-glutaminyl-[protein] + H2O = L-glutamyl-[protein] + NH4(+). Involved in chemotaxis. Part of a chemotaxis signal transduction system that modulates chemotaxis in response to various stimuli. Catalyzes the demethylation of specific methylglutamate residues introduced into the chemoreceptors (methyl-accepting chemotaxis proteins or MCP) by CheR. Also mediates the irreversible deamidation of specific glutamine residues to glutamic acid. This is Protein-glutamate methylesterase/protein-glutamine glutaminase 1 from Pseudomonas fluorescens (strain Pf0-1).